Consider the following 262-residue polypeptide: Phosphate import ATP-binding protein PstB (262 aa).

The ABC transporter domain maps to 16 to 257 (IDVRNLNFYY…PHRKETEDYI (242 aa)). 48-55 (GPSGCGKS) contributes to the ATP binding site.

It belongs to the ABC transporter superfamily. Phosphate importer (TC 3.A.1.7) family. As to quaternary structure, the complex is composed of two ATP-binding proteins (PstB), two transmembrane proteins (PstC and PstA) and a solute-binding protein (PstS).

The protein localises to the cell inner membrane. It carries out the reaction phosphate(out) + ATP + H2O = ADP + 2 phosphate(in) + H(+). In terms of biological role, part of the ABC transporter complex PstSACB involved in phosphate import. Responsible for energy coupling to the transport system. This Cupriavidus pinatubonensis (strain JMP 134 / LMG 1197) (Cupriavidus necator (strain JMP 134)) protein is Phosphate import ATP-binding protein PstB.